The chain runs to 327 residues: Phenylalanine--tRNA ligase alpha subunit (327 aa).

Residue Glu252 participates in Mg(2+) binding.

The protein belongs to the class-II aminoacyl-tRNA synthetase family. Phe-tRNA synthetase alpha subunit type 1 subfamily. As to quaternary structure, tetramer of two alpha and two beta subunits. The cofactor is Mg(2+).

The protein localises to the cytoplasm. It carries out the reaction tRNA(Phe) + L-phenylalanine + ATP = L-phenylalanyl-tRNA(Phe) + AMP + diphosphate + H(+). This chain is Phenylalanine--tRNA ligase alpha subunit, found in Shewanella denitrificans (strain OS217 / ATCC BAA-1090 / DSM 15013).